The sequence spans 164 residues: Large ribosomal subunit protein uL11 (164 aa).

It belongs to the universal ribosomal protein uL11 family. Part of the ribosomal stalk of the 50S ribosomal subunit. Interacts with L10 and the large rRNA to form the base of the stalk. L10 forms an elongated spine to which L12 dimers bind in a sequential fashion forming a multimeric L10(L12)X complex.

Its function is as follows. Forms part of the ribosomal stalk which helps the ribosome interact with GTP-bound translation factors. In Pyrococcus abyssi (strain GE5 / Orsay), this protein is Large ribosomal subunit protein uL11.